We begin with the raw amino-acid sequence, 152 residues long: Homeobox protein ceh-63 (152 aa).

Residues 21-30 show a composition bias toward polar residues; the sequence is NDTNSSQQIK. Disordered regions lie at residues 21–48 and 92–126; these read NDTN…RTTF and RRTK…SQHV. Residues 35–44 show a composition bias toward basic residues; sequence PPKRSNRPTK. Positions 41 to 100 form a DNA-binding region, homeobox; the sequence is RPTKRTTFTSEQVTLLELEFAKNEYICKDRRGELAQTIELTECQVKTWFQNRRTKKRRCT. A compositionally biased stretch (polar residues) spans 116 to 126; the sequence is PSPQNPSSQHV.

As to quaternary structure, may interact with homeobox protein ceh-14.

It is found in the nucleus. Functionally, probable transcription factor, modulating expression of helix-loop-helix protein mbr-1, perhaps acting in concert with homeobox protein ceh-14. May play a minor role in axon guidance in the DVC interneuron. The chain is Homeobox protein ceh-63 from Caenorhabditis elegans.